Consider the following 222-residue polypeptide: UPF0585 protein CG18661 (222 aa).

The protein belongs to the UPF0585 family.

The sequence is that of UPF0585 protein CG18661 from Drosophila melanogaster (Fruit fly).